Reading from the N-terminus, the 356-residue chain is Fructose import permease protein FruF (356 aa).

7 helical membrane-spanning segments follow: residues 25–45 (IVAFILLVIICTIFQHDFLAL), 77–97 (LVISTAGIDLSVGSVMAVAGA), 113–133 (ILIALAVGLAIGCVNGALVSF), 180–200 (FILGIPANFVIAVIIVILVGL), 231–251 (ILFLVYAISGFLAAIAGLFAT), 268–290 (MYAILAVVIGGTSLLGGKFSLAG), and 308–328 (LGVNAEATPAFFAVVVIVICV).

Belongs to the binding-protein-dependent transport system permease family. As to quaternary structure, the complex is composed of an ATP-binding protein (FruK), two transmembrane proteins (FruF and FruG) and a solute-binding protein (FruE).

The protein resides in the cell membrane. In terms of biological role, part of the high-affinity ABC transporter complex FruEKFG involved in fructose uptake. Can also transport ribose and xylose, with lower affinity. Probably responsible for the translocation of the substrate across the membrane. This chain is Fructose import permease protein FruF, found in Bifidobacterium longum (strain NCC 2705).